Here is a 259-residue protein sequence, read N- to C-terminus: Large ribosomal subunit protein uL2m (259 aa).

The tract at residues 234 to 259 (VAMNPVDHPNGGRTKTPKPERSPGVE) is disordered. The segment covering 250–259 (PKPERSPGVE) has biased composition (basic and acidic residues).

The protein belongs to the universal ribosomal protein uL2 family.

It localises to the mitochondrion. The sequence is that of Large ribosomal subunit protein uL2m (RPL2) from Paramecium tetraurelia.